Here is a 485-residue protein sequence, read N- to C-terminus: MTHWIAGDWVLGEGETIQSLSPYNSEVVWKGESATEAQVESAVNAARNAFIEWKKLPFENRQAIVERFAELVKENADSIAEVIAKETGKPFWETKTEAGAMVGKIAISIRAYHERTPYKEREAAGNKIVLRHRPLGVMAVFGPYNFPGHLPNGHIVPALLAGNTVVLKPSEQTPWTSEVIMKLWQKSGLPKGVINLVQGARATGEALANTKGIDGLLFTGSANTGHILHRQFAGDTGKMLALEMGGNNPMVISKAFGDLDATVYTIVQSAFISAGQRCTCARRLYVPEGKQGDALLARLVDVTKNIHVDQPFSETTPFMGPQISIAAAEFILNAQKKLQALGGESLLEARSLGHAFVSPGIIDATNVAELPDEEYFGPLLQVIRYTTLAQAVELANDTRYGLSAGLVSTDDSEWDYFVEHIRSGIVNRNRQLTGASGDAPFGGPGASGNLKPSAYYAADYCAYPMASMEGDACEIPEQLSPGLTL.

Position 220–225 (220–225) interacts with NAD(+); it reads GSANTG. Active-site residues include glutamate 243 and cysteine 278.

This sequence belongs to the aldehyde dehydrogenase family. AstD subfamily.

The catalysed reaction is N-succinyl-L-glutamate 5-semialdehyde + NAD(+) + H2O = N-succinyl-L-glutamate + NADH + 2 H(+). The protein operates within amino-acid degradation; L-arginine degradation via AST pathway; L-glutamate and succinate from L-arginine: step 4/5. In terms of biological role, catalyzes the NAD-dependent reduction of succinylglutamate semialdehyde into succinylglutamate. This Aliivibrio fischeri (strain ATCC 700601 / ES114) (Vibrio fischeri) protein is N-succinylglutamate 5-semialdehyde dehydrogenase.